Consider the following 148-residue polypeptide: Short form salivary protein D7S1 (148 aa).

A signal peptide spans 1–21 (MKQNVFFLIAYFSLVFCMCNA). 3 disulfides stabilise this stretch: cysteine 28-cysteine 61, cysteine 41-cysteine 147, and cysteine 103-cysteine 119.

This sequence belongs to the PBP/GOBP family. In terms of tissue distribution, female salivary gland.

Its subcellular location is the secreted. In terms of biological role, in contrast to the related D7 salivary proteins that can bind biogenic amines, does not bind serotonin. The chain is Short form salivary protein D7S1 from Aedes aegypti (Yellowfever mosquito).